The following is a 175-amino-acid chain: ATP synthase subunit b 1 (175 aa).

The chain crosses the membrane as a helical span at residues 26–48 (IINLAIIIGVLYVYGSKFIGNIL).

This sequence belongs to the ATPase B chain family. F-type ATPases have 2 components, F(1) - the catalytic core - and F(0) - the membrane proton channel. F(1) has five subunits: alpha(3), beta(3), gamma(1), delta(1), epsilon(1). F(0) has four main subunits: a(1), b(1), b'(1) and c(10-14). The alpha and beta chains form an alternating ring which encloses part of the gamma chain. F(1) is attached to F(0) by a central stalk formed by the gamma and epsilon chains, while a peripheral stalk is formed by the delta, b and b' chains.

It localises to the cellular thylakoid membrane. F(1)F(0) ATP synthase produces ATP from ADP in the presence of a proton or sodium gradient. F-type ATPases consist of two structural domains, F(1) containing the extramembraneous catalytic core and F(0) containing the membrane proton channel, linked together by a central stalk and a peripheral stalk. During catalysis, ATP synthesis in the catalytic domain of F(1) is coupled via a rotary mechanism of the central stalk subunits to proton translocation. Functionally, component of the F(0) channel, it forms part of the peripheral stalk, linking F(1) to F(0). The sequence is that of ATP synthase subunit b 1 from Picosynechococcus sp. (strain ATCC 27264 / PCC 7002 / PR-6) (Agmenellum quadruplicatum).